A 261-amino-acid polypeptide reads, in one-letter code: Carbonic anhydrase 1 (261 aa).

A2 is modified (N-acetylalanine). An Alpha-carbonic anhydrase domain is found at 4–261 (ADWGYGSENG…LKGRTVRASF (258 aa)). H65 functions as the Proton donor/acceptor in the catalytic mechanism. Residues H95, H97, and H120 each contribute to the Zn(2+) site. Residues T200 and 200-201 (TH) contribute to the substrate site. Residues 239–261 (AVPVLSNHRPPQPLKGRTVRASF) form a disordered region.

The protein belongs to the alpha-carbonic anhydrase family. Zn(2+) serves as cofactor.

The protein localises to the cytoplasm. The enzyme catalyses hydrogencarbonate + H(+) = CO2 + H2O. It catalyses the reaction urea = cyanamide + H2O. Inhibited by acetazolamide. In terms of biological role, catalyzes the reversible hydration of carbon dioxide. Can hydrate cyanamide to urea. The protein is Carbonic anhydrase 1 (Ca1) of Mus musculus (Mouse).